A 968-amino-acid chain; its full sequence is Glycine dehydrogenase (decarboxylating) (968 aa).

K712 carries the post-translational modification N6-(pyridoxal phosphate)lysine.

This sequence belongs to the GcvP family. In terms of assembly, the glycine cleavage system is composed of four proteins: P, T, L and H. It depends on pyridoxal 5'-phosphate as a cofactor.

It carries out the reaction N(6)-[(R)-lipoyl]-L-lysyl-[glycine-cleavage complex H protein] + glycine + H(+) = N(6)-[(R)-S(8)-aminomethyldihydrolipoyl]-L-lysyl-[glycine-cleavage complex H protein] + CO2. The glycine cleavage system catalyzes the degradation of glycine. The P protein binds the alpha-amino group of glycine through its pyridoxal phosphate cofactor; CO(2) is released and the remaining methylamine moiety is then transferred to the lipoamide cofactor of the H protein. This is Glycine dehydrogenase (decarboxylating) from Prochlorococcus marinus (strain NATL2A).